Reading from the N-terminus, the 369-residue chain is 3-dehydroquinate synthase (369 aa).

NAD(+) contacts are provided by residues 75 to 80, 109 to 113, 133 to 134, Lys146, Lys155, and 173 to 176; these read DGEEHK, GVIGD, TT, and TLKT. The Zn(2+) site is built by Glu188, His251, and His268.

Belongs to the sugar phosphate cyclases superfamily. Dehydroquinate synthase family. Requires Co(2+) as cofactor. It depends on Zn(2+) as a cofactor. NAD(+) serves as cofactor.

It is found in the cytoplasm. The catalysed reaction is 7-phospho-2-dehydro-3-deoxy-D-arabino-heptonate = 3-dehydroquinate + phosphate. It functions in the pathway metabolic intermediate biosynthesis; chorismate biosynthesis; chorismate from D-erythrose 4-phosphate and phosphoenolpyruvate: step 2/7. Its function is as follows. Catalyzes the conversion of 3-deoxy-D-arabino-heptulosonate 7-phosphate (DAHP) to dehydroquinate (DHQ). The sequence is that of 3-dehydroquinate synthase from Legionella pneumophila subsp. pneumophila (strain Philadelphia 1 / ATCC 33152 / DSM 7513).